Here is a 184-residue protein sequence, read N- to C-terminus: UPF0398 protein BCB4264_A1614 (184 aa).

Belongs to the UPF0398 family.

This Bacillus cereus (strain B4264) protein is UPF0398 protein BCB4264_A1614.